The following is a 65-amino-acid chain: Potassium channel toxin alpha-KTx 12.6 (65 aa).

Residues 1–22 (MKMKIFIITIVIALFITSIVEA) form the signal peptide. 3 disulfide bridges follow: cysteine 30–cysteine 51, cysteine 36–cysteine 56, and cysteine 40–cysteine 58.

It belongs to the short scorpion toxin superfamily. Potassium channel inhibitor family. Alpha-KTx 12 subfamily. Expressed by the venom gland.

Its subcellular location is the secreted. Functionally, inhibits voltage-gated potassium channels. This chain is Potassium channel toxin alpha-KTx 12.6, found in Lychas mucronatus (Chinese swimming scorpion).